The primary structure comprises 359 residues: tRNA-specific 2-thiouridylase MnmA (359 aa).

ATP contacts are provided by residues 9 to 16 (GMSGGVDS) and methionine 35. Cysteine 104 (nucleophile) is an active-site residue. The cysteines at positions 104 and 200 are disulfide-linked. Residue glycine 128 coordinates ATP. The interaction with tRNA stretch occupies residues 150–152 (KDQ). Cysteine 200 functions as the Cysteine persulfide intermediate in the catalytic mechanism. An interaction with tRNA region spans residues 306 to 307 (RY).

It belongs to the MnmA/TRMU family.

Its subcellular location is the cytoplasm. It carries out the reaction S-sulfanyl-L-cysteinyl-[protein] + uridine(34) in tRNA + AH2 + ATP = 2-thiouridine(34) in tRNA + L-cysteinyl-[protein] + A + AMP + diphosphate + H(+). Its function is as follows. Catalyzes the 2-thiolation of uridine at the wobble position (U34) of tRNA, leading to the formation of s(2)U34. The sequence is that of tRNA-specific 2-thiouridylase MnmA from Clostridium perfringens (strain ATCC 13124 / DSM 756 / JCM 1290 / NCIMB 6125 / NCTC 8237 / Type A).